The sequence spans 542 residues: POTE ankyrin domain family member C (542 aa).

ANK repeat units follow at residues 138–171 (EDLD…KRDK), 172–201 (QKRT…QLNV), 205–234 (KKRT…DQNI), 238–267 (YGNT…DIES), 271–300 (CGLT…NLNA), 304–333 (YGRT…DVSS), and 337–373 (SGQT…SENS). The tract at residues 369 to 494 (SSENSNPEQD…NTGISQDEIL (126 aa)) is disordered. Composition is skewed to basic and acidic residues over residues 377–392 (QDLK…RLKV), 401–412 (MSQEPEINKDCD), and 466–481 (EEYH…KQLS). Over residues 482–494 (EEQNTGISQDEIL) the composition is skewed to polar residues. Positions 489-538 (SQDEILTNKQKQIEVAEKKMNSELSLSHKKEEDLLRENSMLQEEIAMLIS) form a coiled coil.

This sequence belongs to the POTE family. As to expression, expressed in prostate and testis.

The protein is POTE ankyrin domain family member C (POTEC) of Homo sapiens (Human).